The following is a 607-amino-acid chain: Arginine--tRNA ligase (607 aa).

Residues 147 to 157 (PNIAKEMHVGH) carry the 'HIGH' region motif.

It belongs to the class-I aminoacyl-tRNA synthetase family. As to quaternary structure, monomer.

Its subcellular location is the cytoplasm. It carries out the reaction tRNA(Arg) + L-arginine + ATP = L-arginyl-tRNA(Arg) + AMP + diphosphate. In Prochlorococcus marinus (strain NATL2A), this protein is Arginine--tRNA ligase.